The following is a 146-amino-acid chain: Hemoglobin subunit beta (146 aa).

Val-1 is subject to N-acetylvaline. Positions 2-146 constitute a Globin domain; sequence HLTAEEKSAV…VANALAHKYH (145 aa). Thr-12 carries the post-translational modification Phosphothreonine. Residue Ser-44 is modified to Phosphoserine. The residue at position 59 (Lys-59) is an N6-acetyllysine. Position 63 (His-63) interacts with heme b. N6-acetyllysine is present on Lys-82. His-92 is a heme b binding site. Position 93 is an S-nitrosocysteine (Cys-93). Residue Lys-144 is modified to N6-acetyllysine.

It belongs to the globin family. As to quaternary structure, heterotetramer of two alpha chains and two beta chains. Red blood cells.

Functionally, involved in oxygen transport from the lung to the various peripheral tissues. The sequence is that of Hemoglobin subunit beta (HBB) from Meles meles (Eurasian badger).